The sequence spans 702 residues: BRCA1-associated RING domain protein 1 (702 aa).

An RING-type zinc finger spans residues 18–67 (CVKCKKPRGDLQYLGSSCKHAYCWECIATFQQKPSGKRSSVARHMCPSCA). 2 disordered regions span residues 153 to 205 (DENR…TSVK) and 281 to 346 (ASMS…YGTR). The segment covering 174 to 188 (ASPTRNSTKRPSTVS) has biased composition (polar residues). A compositionally biased stretch (basic and acidic residues) spans 312–321 (IKSDKIERRS). ANK repeat units lie at residues 347–376 (RGEAVLVNSIRNNRIPQLRSAVEAGTCVNE), 379–408 (DGKTPLYVAVENSSLEAVKILVEAGAVINA), and 413–442 (TLETTLHEAVRRQNTQIVEYLLSKGASIKI). Residues 601–702 (MQPKLFAGCK…LGCSITTPPH (102 aa)) form the BRCT domain.

As to quaternary structure, heterodimer (via RING-type zinc finger) with brc-1 to form the core CeBCD complex. Brc-1-brd-1 heterodimer-containing CeBCD complexes bound to chromatin are activated as an E3-ubiquitin ligase in response to DNA damage. The heterodimer interacts with the recombinase rad-51 following ionizing irradiation; the interaction is direct. The heterodimer interacts the E2-ubiquitin-conjugating enzyme let-70 following ionizing irradiation. The heterodimer interacts with the pro-crossover proteins msh-5 and syp-3. Interacts with smt-3, tac-1 and ubc-9. In terms of processing, autoubiquitinated. Phosphorylation of CeBCD complexes is required for E3 ubiquitin-protein ligase activity.

It localises to the cytoplasm. It is found in the nucleus. The protein localises to the chromosome. It carries out the reaction S-ubiquitinyl-[E2 ubiquitin-conjugating enzyme]-L-cysteine + [acceptor protein]-L-lysine = [E2 ubiquitin-conjugating enzyme]-L-cysteine + N(6)-ubiquitinyl-[acceptor protein]-L-lysine.. The protein operates within protein modification; protein ubiquitination. E3 ubiquitin-protein ligase activity of CeBCD complexes occurs at DNA damage sites. Following DNA damage, E3 ubiquitin-protein ligase activity is reduced by caffeine treatment (inhibitor of ATM and ATK kinase activity). In terms of biological role, constituent of the CeBCD complex that possesses E3 ubiquitin-protein ligase activity. When bound to chromatin, the brc-1-brd-1 heterodimer within the CeBCD complex is inactive during normal conditions, but in response to DNA damage, the brc-1-brd-1 heterodimer associates with other proteins such as the recombinase rad-51 or the E2-ubiquitin-conjugating enzyme let-70, which activate the CeBCD complex as an E3-ubiquitin ligase. Moreover, association between the brc-1-brd-1 heterodimer and rad-51 and let-70, probably requires DNA checkpoint proteins such as atl-1 and mre-11 in order to induce ubiquitination at DNA damage sites. To this end, the brc-1-brd-1 heterodimer coordinates a diverse range of cellular pathways such as DNA damage repair, ubiquitination and transcriptional regulation to maintain genomic stability. Plays a role in triggering cellular responses at damage sites in response to DNA damage that may be induced by ionizing radiation for example. In particular, protects against chromosome non-disjunction and nuclear fragmentation during meiotic double-strand break repair to ensure sister chromatid recombination and aid chromosome stability. This Caenorhabditis elegans protein is BRCA1-associated RING domain protein 1.